We begin with the raw amino-acid sequence, 61 residues long: U-poneritoxin(01)-Om5a (61 aa).

A signal peptide spans 1–23; sequence MKLSALSLAFAIILMMTIMYTKA. Residues 24–41 constitute a propeptide that is removed on maturation; that stretch reads DADASADAEADADAEAEA. The residue at position 59 (Gln-59) is a Glutamine amide.

This sequence belongs to the formicidae venom precursor-01 superfamily. Post-translationally, truncated sequences of this peptide have also been found in the venom. It is possible they have been cleaved in the venom. As to expression, expressed by the venom gland.

It localises to the secreted. In terms of biological role, acidic peptide with potent hemolytic activities (94.8% at 50 uM). It also shows low antimicrobial activities against E.coli (MIC=50uM), as well as histamine-releasing activity (28.3% at 10 uM). Does not have activity against S.aureus, and S.cerevisiae. The polypeptide is U-poneritoxin(01)-Om5a (Odontomachus monticola (Trap-jaw ant)).